A 173-amino-acid polypeptide reads, in one-letter code: Small ribosomal subunit protein uS5 (173 aa).

One can recognise an S5 DRBM domain in the interval 17-80; sequence WQERVIQIRR…ADGKKQLIDV (64 aa).

It belongs to the universal ribosomal protein uS5 family. In terms of assembly, part of the 30S ribosomal subunit. Contacts proteins S4 and S8.

Functionally, with S4 and S12 plays an important role in translational accuracy. Its function is as follows. Located at the back of the 30S subunit body where it stabilizes the conformation of the head with respect to the body. This Crocosphaera subtropica (strain ATCC 51142 / BH68) (Cyanothece sp. (strain ATCC 51142)) protein is Small ribosomal subunit protein uS5.